Here is a 428-residue protein sequence, read N- to C-terminus: Enolase (428 aa).

Q163 serves as a coordination point for (2R)-2-phosphoglycerate. E205 acts as the Proton donor in catalysis. Mg(2+) is bound by residues D242, E285, and D312. K337, R366, S367, and K388 together coordinate (2R)-2-phosphoglycerate. The Proton acceptor role is filled by K337.

Belongs to the enolase family. It depends on Mg(2+) as a cofactor.

Its subcellular location is the cytoplasm. The protein resides in the secreted. It localises to the cell surface. The catalysed reaction is (2R)-2-phosphoglycerate = phosphoenolpyruvate + H2O. It functions in the pathway carbohydrate degradation; glycolysis; pyruvate from D-glyceraldehyde 3-phosphate: step 4/5. Catalyzes the reversible conversion of 2-phosphoglycerate (2-PG) into phosphoenolpyruvate (PEP). It is essential for the degradation of carbohydrates via glycolysis. In Polynucleobacter asymbioticus (strain DSM 18221 / CIP 109841 / QLW-P1DMWA-1) (Polynucleobacter necessarius subsp. asymbioticus), this protein is Enolase.